A 274-amino-acid chain; its full sequence is Lectin-like protein (274 aa).

An N-terminal signal peptide occupies residues 1–19; sequence MKIHKLCFLALLLAHTTSA. The tract at residues 28–268 is legume-lectin like; it reads TSELVFLGDA…RHDIWSWTFQ (241 aa). Residues 62-81 form a disordered region; sequence SHGQSLWSTPVPFKPSSNSS. An N-linked (GlcNAc...) asparagine glycan is attached at asparagine 129. Serine 238 carries the phosphoserine modification.

The protein belongs to the leguminous lectin family. Expressed in seedlings and leaves of adult plants.

Its subcellular location is the secreted. It is found in the extracellular space. It localises to the apoplast. The protein resides in the cell membrane. Its function is as follows. Plays a positive role in the effector-triggered immunity (ETI) response. Involved in salicylic acid (SA)-mediated processes occurring in ETI response, but is not involved in the autophagy process. Promotes systemic rather than local immunity. Essential for systemic acquired resistance (SAR), but not necessary for immune signaling downstream of SA. May act in parallel with SA. This Arabidopsis thaliana (Mouse-ear cress) protein is Lectin-like protein.